The following is a 316-amino-acid chain: Retinol dehydrogenase 12 (316 aa).

Position 46–52 (glycine 46–glycine 52) interacts with NADP(+). Serine 175 is a substrate binding site. Tyrosine 200 functions as the Proton acceptor in the catalytic mechanism.

The protein belongs to the short-chain dehydrogenases/reductases (SDR) family. Expressed in the inner segments of the photoreceptor in retina.

The catalysed reaction is all-trans-retinol + NADP(+) = all-trans-retinal + NADPH + H(+). It carries out the reaction 11-cis-retinol + NADP(+) = 11-cis-retinal + NADPH + H(+). It catalyses the reaction 9-cis-retinol + NADP(+) = 9-cis-retinal + NADPH + H(+). The enzyme catalyses a 4-hydroxynonen-1-ol + NADP(+) = a 4-hydroxynonenal + NADPH + H(+). The catalysed reaction is (E)-non-2-en-1-ol + NADP(+) = (E)-non-2-enal + NADPH + H(+). It carries out the reaction (Z)-non-6-en-1-ol + NADP(+) = (Z)-non-6-enal + NADPH + H(+). It catalyses the reaction nonan-1-ol + NADP(+) = nonanal + NADPH + H(+). Its pathway is cofactor metabolism; retinol metabolism. In terms of biological role, retinoids dehydrogenase/reductase with a clear preference for NADP. Displays high activity towards 9-cis, 11-cis and all-trans-retinal. Shows very weak activity toward 13-cis-retinol. Also exhibits activity, albeit with lower affinity than for retinaldehydes, towards lipid peroxidation products (C9 aldehydes) such as 4-hydroxynonenal and trans-2-nonenal. Plays an important function in photoreceptor cells to detoxify 4-hydroxynonenal and potentially other toxic aldehyde products resulting from lipid peroxidation. Has no dehydrogenase activity towards steroids. The polypeptide is Retinol dehydrogenase 12 (Rdh12) (Mus musculus (Mouse)).